A 56-amino-acid chain; its full sequence is Ovomucoid (56 aa).

The Kazal-like domain occupies 6–56 (VDCSEYPKPACTLEYVPICGSDNKTYGNKCNFCNAVVESNGTLTLSHFGKC). Cystine bridges form between cysteine 8–cysteine 38, cysteine 16–cysteine 35, and cysteine 24–cysteine 56. N-linked (GlcNAc...) asparagine glycosylation is present at asparagine 45.

It is found in the secreted. This Cyrtonyx montezumae (Montezuma quail) protein is Ovomucoid.